We begin with the raw amino-acid sequence, 133 residues long: Fluoride-specific ion channel FluC (133 aa).

The next 4 helical transmembrane spans lie at 5 to 25 (VPAT…LGAL), 43 to 63 (VATL…YVVI), 76 to 96 (VIMI…IESL), and 108 to 128 (ISYV…AIVL). 2 residues coordinate Na(+): G83 and T86.

Belongs to the fluoride channel Fluc/FEX (TC 1.A.43) family.

The protein resides in the cell inner membrane. The enzyme catalyses fluoride(in) = fluoride(out). With respect to regulation, na(+) is not transported, but it plays an essential structural role and its presence is essential for fluoride channel function. Its function is as follows. Fluoride-specific ion channel. Important for reducing fluoride concentration in the cell, thus reducing its toxicity. This is Fluoride-specific ion channel FluC from Saccharophagus degradans (strain 2-40 / ATCC 43961 / DSM 17024).